The primary structure comprises 354 residues: Deoxyribonuclease-2-beta (354 aa).

A signal peptide spans 1–22 (MTAKPLRTVLSLLFFALSGVLG). N-linked (GlcNAc...) asparagine glycans are attached at residues Asn-70, Asn-77, Asn-95, Asn-98, Asn-114, Asn-129, Asn-208, Asn-271, and Asn-319.

The protein belongs to the DNase II family. Highly expressed in the eye lens. Detected in liver, but not in the other tissues tested.

The protein resides in the lysosome. It catalyses the reaction Endonucleolytic cleavage to nucleoside 3'-phosphates and 3'-phosphooligonucleotide end-products.. Hydrolyzes DNA under acidic conditions. Does not require divalent cations for activity. Participates in the degradation of nuclear DNA during lens cell differentiation. The protein is Deoxyribonuclease-2-beta (Dnase2b) of Mus musculus (Mouse).